The primary structure comprises 887 residues: Tubulin polyglutamylase TTLL7 (887 aa).

The tract at residues 1 to 21 (MPSLPQEGVIQGPSPLDLNTE) is disordered. The TTL domain occupies 38–390 (KGTITANVAG…RTSDKRRNLA (353 aa)). Residues lysine 160, 166–167 (MG), 188–191 (QEYI), and 201–203 (KFD) contribute to the ATP site. Arginine 227 provides a ligand contact to L-glutamate. 249–250 (TN) contacts ATP. Residues tyrosine 251, serine 252, and lysine 271 each coordinate L-glutamate. Mg(2+) is bound by residues aspartate 336, glutamate 349, and asparagine 351. Position 367 (lysine 367) interacts with L-glutamate. The c-MTBD region stretch occupies residues 388-450 (NLAKQKAEAQ…ISREEHENRH (63 aa)). Disordered regions lie at residues 519–621 (MGKT…TRPF) and 651–676 (LPHSNDACSTNSQVSESLRQLKTKEQ). Positions 548 to 560 (SSDSSYDSSSSSS) are enriched in low complexity. 2 stretches are compositionally biased toward polar residues: residues 593–621 (QQPSSIRRSVSCPRSISAQSPSSGDTRPF) and 656–670 (DACSTNSQVSESLRQ).

The protein belongs to the tubulin--tyrosine ligase family. In terms of assembly, interacts with both alpha- and beta-tubulin (via C-terminal tubulin tails). Requires Mg(2+) as cofactor. In terms of tissue distribution, highly expressed in the nervous system including spinal cord, thalamus, hippocampus, hypothalamus and cerebellum.

It localises to the cell projection. The protein resides in the cilium. The protein localises to the cytoplasm. It is found in the cytoskeleton. Its subcellular location is the cilium basal body. It localises to the dendrite. The protein resides in the perikaryon. It catalyses the reaction L-glutamyl-[protein] + L-glutamate + ATP = gamma-L-glutamyl-L-glutamyl-[protein] + ADP + phosphate + H(+). The enzyme catalyses (L-glutamyl)(n)-gamma-L-glutamyl-L-glutamyl-[protein] + L-glutamate + ATP = (L-glutamyl)(n+1)-gamma-L-glutamyl-L-glutamyl-[protein] + ADP + phosphate + H(+). In terms of biological role, polyglutamylase which modifies tubulin, generating polyglutamate side chains of variable lengths on the gamma-carboxyl group of specific glutamate residues within the C-terminal tail of tubulin. Mediates both ATP-dependent initiation and elongation steps of the polyglutamylation reaction. Preferentially modifies the beta-tubulin tail over an alpha-tail. Competes with monoglycylase TTLL3 for modification site on beta-tubulin substrate, thereby creating an anticorrelation between glycylation and glutamylation reactions. Required for neurite growth; responsible for the strong increase in tubulin polyglutamylation during postnatal neuronal maturation. The chain is Tubulin polyglutamylase TTLL7 from Homo sapiens (Human).